The primary structure comprises 298 residues: NADH-cytochrome b5 reductase 2 (298 aa).

Residues 13–33 (FLPFAIGAVAVTAGALYLNGW) form a helical membrane-spanning segment. In terms of domain architecture, FAD-binding FR-type spans 48–152 (RKWIDLELEK…QGPIPKWQWK (105 aa)). 155–190 (SFDTITLLGGGTGITPLYQLVHHITQNKEDKTKINL) serves as a coordination point for FAD.

This sequence belongs to the flavoprotein pyridine nucleotide cytochrome reductase family. The cofactor is FAD.

The protein resides in the mitochondrion outer membrane. The catalysed reaction is 2 Fe(III)-[cytochrome b5] + NADH = 2 Fe(II)-[cytochrome b5] + NAD(+) + H(+). In terms of biological role, may mediate the reduction of outer membrane cytochrome b5. The chain is NADH-cytochrome b5 reductase 2 (MCR1) from Candida glabrata (strain ATCC 2001 / BCRC 20586 / JCM 3761 / NBRC 0622 / NRRL Y-65 / CBS 138) (Yeast).